The sequence spans 503 residues: Lysine--tRNA ligase (503 aa).

Mg(2+) contacts are provided by Glu412 and Glu419.

Belongs to the class-II aminoacyl-tRNA synthetase family. As to quaternary structure, homodimer. Requires Mg(2+) as cofactor.

It is found in the cytoplasm. The catalysed reaction is tRNA(Lys) + L-lysine + ATP = L-lysyl-tRNA(Lys) + AMP + diphosphate. This is Lysine--tRNA ligase from Idiomarina loihiensis (strain ATCC BAA-735 / DSM 15497 / L2-TR).